We begin with the raw amino-acid sequence, 74 residues long: U3-agatoxin-Ao1g (74 aa).

The signal sequence occupies residues 1–20 (MRAIISLLLISTMVFGVIEA). A propeptide spanning residues 21–34 (VSVEEGLKIFEGER) is cleaved from the precursor. Intrachain disulfides connect C37-C53, C44-C58, C52-C68, and C60-C66. N72 is subject to Asparagine amide.

This sequence belongs to the neurotoxin 07 (Beta/delta-agtx) family. 03 (aga-4) subfamily. Aga sub-subfamily. In terms of tissue distribution, expressed by the venom gland.

The protein resides in the secreted. Insecticidal neurotoxin that modulates the insect Nav channel (DmNaV1/tipE (para/tipE)) in a unique manner, with both the activation and inactivation processes being affected. The voltage dependence of activation is shifted toward more hyperpolarized potentials (analogous to site 4 toxins) and a non-inactivating persistent sodium current is induced (site 3-like action). Interestingly, both effects take place in a voltage-dependent manner, producing a bell-shaped curve between -80 and 0 mV. This chain is U3-agatoxin-Ao1g, found in Agelena orientalis (Funnel-web spider).